The chain runs to 579 residues: Laccase-24 (579 aa).

The N-terminal stretch at 1 to 23 (MARSWSLLLLPFALALVASVAQA) is a signal peptide. Plastocyanin-like domains are found at residues 31 to 148 (NVGN…PRGG) and 159 to 322 (EEVV…YGGG). N-linked (GlcNAc...) asparagine glycosylation is found at Asn-34 and Asn-78. His-82 and His-84 together coordinate Cu cation. Asn-110 and Asn-116 each carry an N-linked (GlcNAc...) asparagine glycan. Cu cation contacts are provided by His-127 and His-129. Asn-204, Asn-209, Asn-219, Asn-241, Asn-312, Asn-337, Asn-348, Asn-398, Asn-405, Asn-444, and Asn-462 each carry an N-linked (GlcNAc...) asparagine glycan. The Plastocyanin-like 3 domain maps to 425–563 (DFPDTPPIVF…GMVFEVQNGP (139 aa)). The Cu cation site is built by His-480, His-483, and His-485. N-linked (GlcNAc...) asparagine glycosylation occurs at Asn-500. The Cu cation site is built by His-542, Cys-543, His-544, and His-548.

This sequence belongs to the multicopper oxidase family. The cofactor is Cu cation.

The protein localises to the secreted. The protein resides in the extracellular space. It localises to the apoplast. It catalyses the reaction 4 hydroquinone + O2 = 4 benzosemiquinone + 2 H2O. Functionally, lignin degradation and detoxification of lignin-derived products. The chain is Laccase-24 (LAC24) from Oryza sativa subsp. japonica (Rice).